Consider the following 424-residue polypeptide: Calreticulin (424 aa).

The first 19 residues, 1–19, serve as a signal peptide directing secretion; it reads MRLLLCLIFLVFVFNFALS. Cys105 and Cys137 are joined by a disulfide. 4 residues coordinate an alpha-D-glucoside: Tyr109, Lys111, Tyr128, and Asp135. 7 repeat units span residues 191–202, 210–221, 227–238, 246–256, 260–270, 274–284, and 288–298. Positions 191 to 256 are 4 X 12 AA approximate repeats; that stretch reads IQAGNLADDW…EAVKPEDWNE (66 aa). Residues 260–298 are 3 X 11 AA approximate repeats; the sequence is GEWEAPTIANPEYKGEWKAKKIPNPEYKGEWVHPLIDNP. Glu318 is an an alpha-D-glucoside binding site. Residues 370 to 385 are compositionally biased toward basic and acidic residues; that stretch reads RKKADEKLAAEKAAEK. The tract at residues 370–424 is disordered; sequence RKKADEKLAAEKAAEKEAEEADEEEEEVAEEDLVKTDDKKEEVKKSTKKVDHDEL. Over residues 386 to 400 the composition is skewed to acidic residues; that stretch reads EAEEADEEEEEVAEE. The span at 401–424 shows a compositional bias: basic and acidic residues; sequence DLVKTDDKKEEVKKSTKKVDHDEL. The short motif at 421-424 is the Prevents secretion from ER element; the sequence is HDEL.

The protein belongs to the calreticulin family.

It is found in the endoplasmic reticulum lumen. Functionally, molecular calcium-binding chaperone promoting folding, oligomeric assembly and quality control in the ER via the calreticulin/calnexin cycle. This lectin may interact transiently with almost all of the monoglucosylated glycoproteins that are synthesized in the ER. In Dictyostelium discoideum (Social amoeba), this protein is Calreticulin (crtA).